A 165-amino-acid polypeptide reads, in one-letter code: Sulfopyruvate decarboxylase subunit alpha (165 aa).

The protein belongs to the ComD family. Heterododecamer composed of 6 subunits alpha and 6 subunits beta.

The catalysed reaction is 3-sulfopyruvate + H(+) = sulfoacetaldehyde + CO2. It participates in cofactor biosynthesis; coenzyme M biosynthesis; sulfoacetaldehyde from phosphoenolpyruvate and sulfite: step 4/4. Its function is as follows. Involved in the biosynthesis of the coenzyme M (2-mercaptoethanesulfonic acid). Catalyzes the decarboxylation of sulfopyruvate to sulfoacetaldehyde. In Methanothermobacter thermautotrophicus (strain ATCC 29096 / DSM 1053 / JCM 10044 / NBRC 100330 / Delta H) (Methanobacterium thermoautotrophicum), this protein is Sulfopyruvate decarboxylase subunit alpha.